A 311-amino-acid polypeptide reads, in one-letter code: Histidine decarboxylase proenzyme (311 aa).

Positions 64 and 82 each coordinate substrate. Ser-83 is subject to Pyruvic acid (Ser). The Proton donor role is filled by Glu-198.

As to quaternary structure, the proenzyme is a hexamer of identical pi chains; each pi chain monomer is cleaved to form a small (or beta) chain and a large (or alpha) chain by non-hydrolytic self-catalysis. Pyruvate serves as cofactor.

It catalyses the reaction L-histidine + H(+) = histamine + CO2. In Lactobacillus sp. (strain 30a), this protein is Histidine decarboxylase proenzyme (hdcA).